The primary structure comprises 150 residues: Ribosome-binding factor A (150 aa).

Positions 126–150 (EVARDLSHDDDEDGGADEAPRNGDE) are disordered.

The protein belongs to the RbfA family. In terms of assembly, monomer. Binds 30S ribosomal subunits, but not 50S ribosomal subunits or 70S ribosomes.

It localises to the cytoplasm. One of several proteins that assist in the late maturation steps of the functional core of the 30S ribosomal subunit. Associates with free 30S ribosomal subunits (but not with 30S subunits that are part of 70S ribosomes or polysomes). Required for efficient processing of 16S rRNA. May interact with the 5'-terminal helix region of 16S rRNA. The protein is Ribosome-binding factor A of Brucella abortus (strain S19).